Reading from the N-terminus, the 220-residue chain is Ribosomal RNA large subunit methyltransferase E (220 aa).

5 residues coordinate S-adenosyl-L-methionine: G60, W62, D92, D108, and D133. K173 serves as the catalytic Proton acceptor.

Belongs to the class I-like SAM-binding methyltransferase superfamily. RNA methyltransferase RlmE family.

It localises to the cytoplasm. The catalysed reaction is uridine(2552) in 23S rRNA + S-adenosyl-L-methionine = 2'-O-methyluridine(2552) in 23S rRNA + S-adenosyl-L-homocysteine + H(+). Specifically methylates the uridine in position 2552 of 23S rRNA at the 2'-O position of the ribose in the fully assembled 50S ribosomal subunit. The protein is Ribosomal RNA large subunit methyltransferase E of Burkholderia multivorans (strain ATCC 17616 / 249).